A 304-amino-acid polypeptide reads, in one-letter code: Oxygen-dependent coproporphyrinogen-III oxidase (304 aa).

A substrate-binding site is contributed by Ser-94. Positions 98 and 108 each coordinate a divalent metal cation. His-108 serves as the catalytic Proton donor. Residue 110–112 participates in substrate binding; sequence NVR. Residues His-147 and His-177 each contribute to the a divalent metal cation site. The tract at residues 242–277 is important for dimerization; that stretch reads YVEFNLVYDRGTLFGLQTGGRTESILMSMPPLVRWQ. 260 to 262 is a substrate binding site; the sequence is GGR.

The protein belongs to the aerobic coproporphyrinogen-III oxidase family. Homodimer. A divalent metal cation serves as cofactor.

The protein localises to the cytoplasm. It carries out the reaction coproporphyrinogen III + O2 + 2 H(+) = protoporphyrinogen IX + 2 CO2 + 2 H2O. The protein operates within porphyrin-containing compound metabolism; protoporphyrin-IX biosynthesis; protoporphyrinogen-IX from coproporphyrinogen-III (O2 route): step 1/1. Its function is as follows. Involved in the heme biosynthesis. Catalyzes the aerobic oxidative decarboxylation of propionate groups of rings A and B of coproporphyrinogen-III to yield the vinyl groups in protoporphyrinogen-IX. The chain is Oxygen-dependent coproporphyrinogen-III oxidase from Shewanella amazonensis (strain ATCC BAA-1098 / SB2B).